Consider the following 67-residue polypeptide: MKVKELREMTDVELRKKLADTKDELFRLRFQSATGQLDNPMKIQEVRRRIARVKTVLRERELGIKHA.

This sequence belongs to the universal ribosomal protein uL29 family.

This is Large ribosomal subunit protein uL29 from Desulforudis audaxviator (strain MP104C).